The chain runs to 230 residues: Lipoprotein-releasing system ATP-binding protein LolD (230 aa).

Residues 6-230 (LQVQAVSKSY…GYLQVPESAQ (225 aa)) enclose the ABC transporter domain. Residue 42–49 (GTSGSGKS) participates in ATP binding.

It belongs to the ABC transporter superfamily. Lipoprotein translocase (TC 3.A.1.125) family. As to quaternary structure, the complex is composed of two ATP-binding proteins (LolD) and two transmembrane proteins (LolC and LolE).

The protein resides in the cell inner membrane. In terms of biological role, part of the ABC transporter complex LolCDE involved in the translocation of mature outer membrane-directed lipoproteins, from the inner membrane to the periplasmic chaperone, LolA. Responsible for the formation of the LolA-lipoprotein complex in an ATP-dependent manner. The protein is Lipoprotein-releasing system ATP-binding protein LolD of Shewanella oneidensis (strain ATCC 700550 / JCM 31522 / CIP 106686 / LMG 19005 / NCIMB 14063 / MR-1).